We begin with the raw amino-acid sequence, 277 residues long: PTS system sorbose-specific EIIC component (277 aa).

5 helical membrane-spanning segments follow: residues 1–21 (MAISTIQIILIFIWSSVVGMG), 92–112 (IQKGIAIALPVAAAGQVLTVL), 133–153 (FTAIIWLHFTALIVQALRVSI), 177–197 (VITGGLAVAGGFIVVVGYAMI), and 219–239 (YLKLSLLAWGAVGLIFAIVYV). Residues 3–237 (ISTIQIILIF…GAVGLIFAIV (235 aa)) enclose the PTS EIIC type-4 domain.

The protein localises to the cell membrane. Its function is as follows. The phosphoenolpyruvate-dependent sugar phosphotransferase system (PTS), a major carbohydrate active transport system, catalyzes the phosphorylation of incoming sugar substrates concomitant with their translocation across the cell membrane. The enzyme II SorABCD PTS system is involved in L-sorbose transport. This Lacticaseibacillus casei (Lactobacillus casei) protein is PTS system sorbose-specific EIIC component.